An 807-amino-acid chain; its full sequence is Probable E3 ubiquitin-protein ligase mug30 (807 aa).

The HECT domain maps to 453 to 807; the sequence is RNKDFRKALK…LLETNGFNIR (355 aa). Cys775 functions as the Glycyl thioester intermediate in the catalytic mechanism.

The protein localises to the cytoplasm. The protein resides in the cytoskeleton. It localises to the microtubule organizing center. It is found in the spindle pole body. The catalysed reaction is S-ubiquitinyl-[E2 ubiquitin-conjugating enzyme]-L-cysteine + [acceptor protein]-L-lysine = [E2 ubiquitin-conjugating enzyme]-L-cysteine + N(6)-ubiquitinyl-[acceptor protein]-L-lysine.. It functions in the pathway protein modification; protein ubiquitination. Functionally, probable E3 ubiquitin-protein ligase. Has a role in meiosis. The protein is Probable E3 ubiquitin-protein ligase mug30 (mug30) of Schizosaccharomyces pombe (strain 972 / ATCC 24843) (Fission yeast).